Here is a 327-residue protein sequence, read N- to C-terminus: ATP-dependent 6-phosphofructokinase (327 aa).

ATP contacts are provided by residues glycine 11, 72-73 (RS), and 102-105 (GDGS). Aspartate 103 is a binding site for Mg(2+). Position 127 to 129 (127 to 129 (TID)) interacts with substrate. Aspartate 129 serves as the catalytic Proton acceptor. Residue arginine 156 coordinates ADP. Substrate contacts are provided by residues arginine 164 and 171–173 (MGR). 187 to 189 (GAE) contributes to the ADP binding site. Substrate contacts are provided by residues glutamate 224, arginine 245, and 251–254 (HIQR).

It belongs to the phosphofructokinase type A (PFKA) family. ATP-dependent PFK group I subfamily. Prokaryotic clade 'B1' sub-subfamily. In terms of assembly, homotetramer. It depends on Mg(2+) as a cofactor.

It localises to the cytoplasm. It carries out the reaction beta-D-fructose 6-phosphate + ATP = beta-D-fructose 1,6-bisphosphate + ADP + H(+). It functions in the pathway carbohydrate degradation; glycolysis; D-glyceraldehyde 3-phosphate and glycerone phosphate from D-glucose: step 3/4. Allosterically activated by ADP and other diphosphonucleosides, and allosterically inhibited by phosphoenolpyruvate. Catalyzes the phosphorylation of D-fructose 6-phosphate to fructose 1,6-bisphosphate by ATP, the first committing step of glycolysis. This chain is ATP-dependent 6-phosphofructokinase, found in Sulfurovum sp. (strain NBC37-1).